A 173-amino-acid polypeptide reads, in one-letter code: Nucleoside-triphosphatase THEP1 (173 aa).

Residues 9 to 16 (GPPGVGKT) and 97 to 104 (LYVIDEVG) each bind ATP.

Belongs to the THEP1 NTPase family.

The enzyme catalyses a ribonucleoside 5'-triphosphate + H2O = a ribonucleoside 5'-diphosphate + phosphate + H(+). Functionally, has nucleotide phosphatase activity towards ATP, GTP, CTP, TTP and UTP. May hydrolyze nucleoside diphosphates with lower efficiency. This chain is Nucleoside-triphosphatase THEP1, found in Caldivirga maquilingensis (strain ATCC 700844 / DSM 13496 / JCM 10307 / IC-167).